Reading from the N-terminus, the 250-residue chain is Exosome complex component Rrp41 (250 aa).

This sequence belongs to the RNase PH family. Rrp41 subfamily. Component of the archaeal exosome complex. Forms a hexameric ring-like arrangement composed of 3 Rrp41-Rrp42 heterodimers. The hexameric ring associates with a trimer of Rrp4 and/or Csl4 subunits.

The protein localises to the cytoplasm. Functionally, catalytic component of the exosome, which is a complex involved in RNA degradation. Has 3'-&gt;5' exoribonuclease activity. Can also synthesize heteromeric RNA-tails. This is Exosome complex component Rrp41 from Pyrococcus furiosus (strain ATCC 43587 / DSM 3638 / JCM 8422 / Vc1).